Reading from the N-terminus, the 237-residue chain is Probable aquaporin SIP2-1 (237 aa).

A run of 6 helical transmembrane segments spans residues 15-35 (FMWIWAGVLVNILVHGVLGFS), 39-59 (PSGEIVRYLFSIISMFIFAYL), 71-91 (LTALAAGVSGGFSSFIFSVFV), 122-142 (VAIHHGALTEGILTFFIVLLS), 169-189 (ILGSDLTGGCMNPAAVMGWAY), and 202-222 (VYWLGPVKATLLAVWFFKVVF). The short motif at 69–71 (NPL) is the NPA 1 element. The NPA 2 signature appears at 180 to 182 (NPA).

The protein belongs to the MIP/aquaporin (TC 1.A.8) family. SIP (TC 1.A.8.10) subfamily. As to expression, expressed in dividing cells and elongating regions of the root tips, emerging lateral roots, root steles, cotyledons, main veins of the rosette leaves, vascular tissues of the flower petals, stigma, stamens (anthers and filaments), pollen and the top and bottom (receptacle) of siliques.

It localises to the endoplasmic reticulum membrane. In terms of biological role, water channel required to facilitate the transport of water across cell membrane. Inactive in yeast cells. This Arabidopsis thaliana (Mouse-ear cress) protein is Probable aquaporin SIP2-1 (SIP2-1).